The chain runs to 897 residues: Ubiquitin carboxyl-terminal hydrolase 33 (897 aa).

The UBP-type zinc-finger motif lies at asparagine 7–valine 110. Residues cysteine 9, histidine 11, cysteine 31, cysteine 34, cysteine 44, cysteine 49, cysteine 54, histidine 61, histidine 65, histidine 71, cysteine 84, and cysteine 87 each coordinate Zn(2+). Residues threonine 156–serine 670 form the USP domain. The active-site Nucleophile is the cysteine 165. Disordered stretches follow at residues leucine 261–valine 308 and glycine 343–valine 420. The segment covering aspartate 287 to serine 297 has biased composition (polar residues). Basic and acidic residues-rich tracts occupy residues aspartate 299–valine 308 and serine 344–aspartate 353. Positions threonine 355–isoleucine 396 are enriched in polar residues. Residues serine 398 to proline 411 are compositionally biased toward low complexity. Histidine 628 (proton acceptor) is an active-site residue. DUSP domains are found at residues aspartate 672–cysteine 765 and glutamate 773–valine 876. Low complexity predominate over residues serine 875–serine 884. The segment at serine 875–valine 897 is disordered. Basic and acidic residues predominate over residues serine 886–valine 897.

Belongs to the peptidase C19 family. USP20/USP33 subfamily.

It localises to the cytoplasm. Its subcellular location is the perinuclear region. The protein localises to the cytoskeleton. It is found in the microtubule organizing center. The protein resides in the centrosome. It carries out the reaction Thiol-dependent hydrolysis of ester, thioester, amide, peptide and isopeptide bonds formed by the C-terminal Gly of ubiquitin (a 76-residue protein attached to proteins as an intracellular targeting signal).. Deubiquitinating enzyme involved in various processes such as centrosome duplication, cellular migration and beta-2 adrenergic receptor/ADRB2 recycling. Involved in regulation of centrosome duplication by mediating deubiquitination of ccp110 in S and G2/M phase, leading to stabilize ccp110 during the period which centrioles duplicate and elongate. Involved in cell migration via its interaction with intracellular domain of robo1, leading to regulate the Slit signaling. Plays a role in commissural axon guidance cross the ventral midline of the neural tube in a Slit-dependent manner, possibly by mediating the deubiquitination of robo1. Acts as a regulator of G-protein coupled receptor (GPCR) signaling by mediating the deubiquitination of beta-arrestins (arrb1 and arrb2) and beta-2 adrenergic receptor (adrb2). Deubiquitinates dio2, thereby regulating thyroid hormone regulation. Mediates deubiquitination of both 'Lys-48'- and 'Lys-63'-linked polyubiquitin chains. The chain is Ubiquitin carboxyl-terminal hydrolase 33 (usp33) from Danio rerio (Zebrafish).